An 86-amino-acid polypeptide reads, in one-letter code: Exodeoxyribonuclease 7 small subunit (86 aa).

Positions 1–26 are disordered; the sequence is MQDELFETEKAPQKNTKNAKNAPKKS.

The protein belongs to the XseB family. Heterooligomer composed of large and small subunits.

The protein localises to the cytoplasm. It carries out the reaction Exonucleolytic cleavage in either 5'- to 3'- or 3'- to 5'-direction to yield nucleoside 5'-phosphates.. In terms of biological role, bidirectionally degrades single-stranded DNA into large acid-insoluble oligonucleotides, which are then degraded further into small acid-soluble oligonucleotides. This chain is Exodeoxyribonuclease 7 small subunit, found in Helicobacter pylori (strain HPAG1).